A 1762-amino-acid chain; its full sequence is ADAMTS-like protein 1 (1762 aa).

A signal peptide spans 1 to 28 (MECCRRATPGTLLLFLAFLLLSSRTARS). One can recognise a TSP type-1 1 domain in the interval 33 to 82 (DGLWDAWGPWSECSRTCGGGASYSLRRCLSSKSCEGRNIRYRTCSNVDCP). C-linked (Man) tryptophan glycosylation is found at tryptophan 39 and tryptophan 42. Cystine bridges form between cysteine 45-cysteine 76, cysteine 49-cysteine 81, and cysteine 60-cysteine 66. Threonine 48 is a glycosylation site (O-linked (Fuc...) threonine). Asparagine 251 carries an N-linked (GlcNAc...) asparagine glycan. O-linked (Fuc...) threonine glycosylation is present at threonine 312. TSP type-1 domains are found at residues 376 to 424 (PLPR…MYTP), 436 to 493 (DCPK…TPCY), 522 to 584 (EEPS…GPCS), 607 to 665 (ELYD…NLDP), 666 to 729 (CPAR…FNCP), and 788 to 850 (CPSE…ATCA). A glycan (O-linked (Fuc...) serine) is linked at serine 391. Threonine 451 is a glycosylation site (O-linked (Fuc...) threonine). Intrachain disulfides connect cysteine 534-cysteine 578, cysteine 538-cysteine 583, and cysteine 549-cysteine 567. 7 disulfides stabilise this stretch: cysteine 678/cysteine 723, cysteine 682/cysteine 728, cysteine 693/cysteine 712, cysteine 800/cysteine 844, cysteine 804/cysteine 849, cysteine 815/cysteine 832, and cysteine 899/cysteine 947. In terms of domain architecture, Ig-like C2-type 1 spans 861–963 (PHIAAARKVY…EHFVIKLIGG (103 aa)). Positions 1120–1164 (LKPSERRTSPVTLSPHKHVSGFSSSLRTSSTGDAGGGSRRPHRKP) are disordered. Residues 1139-1151 (SGFSSSLRTSSTG) are compositionally biased toward low complexity. Ig-like C2-type domains lie at 1164–1266 (PTIL…IAVT), 1286–1369 (PAVT…TQLL), and 1395–1485 (PSVL…ASLV). 3 disulfide bridges follow: cysteine 1202/cysteine 1250, cysteine 1308/cysteine 1353, and cysteine 1418/cysteine 1469. TSP type-1 domains lie at 1545–1608 (CPSR…QLCV) and 1666–1726 (CSVH…TPCE). Residues 1726–1762 (ENMECRDTTRYCEKVKQLKLCQLSQFKSRCCGTCGKA) form the PLAC domain.

In terms of assembly, monomer. Post-translationally, C-, N- and O-glycosylated. O-fucosylated by POFUT2 on a serine or a threonine residue found within the consensus sequence C1-X(2)-(S/T)-C2-G of the TSP type-1 repeat domains where C1 and C2 are the first and second cysteine residue of the repeat, respectively. Fucosylated repeats can then be further glycosylated by the addition of a beta-1,3-glucose residue by the glucosyltransferase, B3GALTL. Fucosylation mediates the efficient secretion of ADAMTSL1. Can also be C-glycosylated with one or two mannose molecules on tryptophan residues within the consensus sequence W-X-X-W of the TPRs, and N-glycosylated. These other glycosylations can also facilitate secretion. Disulfide bonds are present. In terms of tissue distribution, expressed primarily in adult skeletal muscle.

It is found in the secreted. The protein localises to the extracellular space. The protein resides in the extracellular matrix. This chain is ADAMTS-like protein 1 (ADAMTSL1), found in Homo sapiens (Human).